Here is an 864-residue protein sequence, read N- to C-terminus: A-kinase anchor protein 3 (864 aa).

At serine 12 the chain carries Phosphoserine; by STK33. A PKA-RII subunit binding domain region spans residues 125-138 (VSFYANRLTNLVIA). Disordered regions lie at residues 190 to 235 (NISS…DKPG) and 251 to 281 (AGDAKEGGRSLPGDQKLFRTSPDNRPDDFSN). A compositionally biased stretch (polar residues) spans 204 to 218 (SGSSQAPGLRYTSTL). Serine 206 is modified (phosphoserine). Over residues 219–235 (KIKESTKEGKCPDDKPG) the composition is skewed to basic and acidic residues. Serine 405 bears the Phosphoserine mark. Tyrosine 406 is subject to Phosphotyrosine. Residues 619–638 (VHEQNTQEEEIHPCERPKTP) form a disordered region. Positions 627–638 (EEIHPCERPKTP) are enriched in basic and acidic residues.

It belongs to the AKAP110 family. As to quaternary structure, interacts with ROPN1 and ROPN1L. Interacts with QRICH2. Post-translationally, phosphorylated by STK33 during sperm flagella assembly. Phosphorylated on tyrosine.

The protein localises to the cytoplasmic vesicle. The protein resides in the secretory vesicle. It is found in the acrosome. It localises to the cell projection. Its subcellular location is the cilium. The protein localises to the flagellum. Structural component of sperm fibrous sheath. Required for the formation of the subcellular structure of the sperm flagellum, sperm motility and male fertility. The polypeptide is A-kinase anchor protein 3 (Mus musculus (Mouse)).